We begin with the raw amino-acid sequence, 152 residues long: Small ribosomal subunit protein uS11A (152 aa).

Residues 131–152 (EDVTPIPSDSTRRKGGRRGRRL) form a disordered region. The segment covering 143-152 (RKGGRRGRRL) has biased composition (basic residues).

The protein belongs to the universal ribosomal protein uS11 family.

The sequence is that of Small ribosomal subunit protein uS11A from Anopheles gambiae (African malaria mosquito).